The primary structure comprises 418 residues: RuvB-like helicase 2 (418 aa).

65–72 (GDRGSGKT) is a binding site for ATP.

The protein belongs to the RuvB family. As to quaternary structure, component of the SWR1 chromatin remodeling complex, the INO80 chromatin remodeling complex, and of the R2TP complex.

The protein localises to the nucleus. The catalysed reaction is ATP + H2O = ADP + phosphate + H(+). Functionally, DNA helicase which participates in several chromatin remodeling complexes, including the SWR1 and the INO80 complexes. The SWR1 complex mediates the ATP-dependent exchange of histone H2A for the H2A variant HZT1 leading to transcriptional regulation of selected genes by chromatin remodeling. The INO80 complex remodels chromatin by shifting nucleosomes and is involved in DNA repair. Also involved in pre-rRNA processing. The protein is RuvB-like helicase 2 (RVB2) of Encephalitozoon cuniculi (strain GB-M1) (Microsporidian parasite).